The sequence spans 374 residues: MVKYDAIILGSGVLGLSIASELILKGLKVAVVGKDLPEDLDSTGFASPWAGASWRSVAVNEAERRRDHYTFEQFARLAKEVPHLCEKRAYYYFWTCEDAWKEPWYKDLVFGYRMLKPEEVHAPFKYGVTYEAYTLNTPLYLLHLASTLRSAHVPIIRARLSSLDEAYSLPQLGPVDLVINATGLGARSLLGVEDPTVFPAKGQTVLVRAPVKECYGLVDPLPQPSQKAYIIPRPGPDGHVILGGCYLPNDWSTNVDPQVAEEILKQCHTLCPRLDGKGGKGTWKDIEVIAHNTGLRPVREAGLRCELEERVIGGKVRAGLATKGGKVGSGRKVSVVHAYGIGPAGYQASLGIAKELGELVDACVKKSSDNKAKL.

Residues 1 to 19 (MVKYDAIILGSGVLGLSIA) form the signal peptide. Ser-11, Leu-14, Lys-34, Asp-35, Ala-46, Ser-47, and Gly-51 together coordinate FAD. An N-linked (GlcNAc...) asparagine glycan is attached at Asn-180. Cysteines 214 and 271 form a disulfide. Positions 229, 246, and 296 each coordinate (R)-lactate. Anthranilate-binding residues include Tyr-229, Tyr-246, and Arg-296. Residues Arg-296, Gly-342, Gly-345, Tyr-346, and Gln-347 each coordinate FAD. The Microbody targeting signal signature appears at 372–374 (AKL).

The protein belongs to the DAMOX/DASOX family. The cofactor is FAD.

The protein resides in the peroxisome matrix. It carries out the reaction a D-alpha-amino acid + O2 + H2O = a 2-oxocarboxylate + H2O2 + NH4(+). Functionally, catalyzes the oxidative deamination of D-amino acids with broad substrate specificity. Enables the organism to utilize D-amino acids as a source of nutrients. Enables the organism to utilize D-asparate and D-glutamate as a nitrogen source and may also contribute to utlization of D-tryptophan, D-tyrosine and D-asparagine as a nitrogen source. Protects the organism from the toxicity of D-amino acids, including from D-glutamate. May play a role in its interaction with the host. The chain is D-amino-acid oxidase 3 from Cryptococcus deuterogattii (strain R265) (Cryptococcus gattii VGII (strain R265)).